Here is a 487-residue protein sequence, read N- to C-terminus: MSLPPIRLPSPYGSDRLVQLAARLRPALCDTLITVGSQEFPAHSLVLAGVSQQLGRRGQWALGEGISPSTFAQLLNFVYGESVELQPGELRPLQEAARALGVQSLEEACWRARGDRAKKPDPGLKKHQEEPEKPSRNPERELGDPGEKQKPEQVSRTGGREQEMLHKHSPPRGRPEMAGATQEAQQEQTRSKEKRLQAPVGQRGADGKHGVLTWLRENPGGSEESLRKLPGPLPPAGSLQTSVTPRPSWAEAPWLVGGQPALWSILLMPPRYGIPFYHSTPTTGAWQEVWREQRIPLSLNAPKGLWSQNQLASSSPTPGSLPQGPAQLSPGEMEESDQGHTGALATCAGHEDKAGCPPRPHPPPAPPARSRPYACSVCGKRFSLKHQMETHYRVHTGEKPFSCSLCPQRSRDFSAMTKHLRTHGAAPYRCSLCGAGCPSLASMQAHMRGHSPSQLPPGWTIRSTFLYSSSRPSRPSTSPCCPSSSTT.

One can recognise a BTB domain in the interval Cys29–Pro87. The segment covering Ala112–His166 has biased composition (basic and acidic residues). Disordered stretches follow at residues Ala112 to Thr244 and Gln308 to Arg371. Polar residues predominate over residues Gln308 to Ser320. A compositionally biased stretch (pro residues) spans Pro357–Arg369. 3 consecutive C2H2-type zinc fingers follow at residues Tyr373–His395, Phe401–His423, and Tyr428–His450. The segment at Ser468–Thr487 is disordered.

It belongs to the krueppel C2H2-type zinc-finger protein family. In terms of assembly, homodimer (via PTB domain). Interacts with the N-terminal of FANCC. Interacts with ZBTB16. Interacts with GATA3. In terms of tissue distribution, predominantly expressed in testis. Some isoforms are ubiquitously expressed.

The protein resides in the nucleus. Functionally, DNA-binding protein that binds to the to a 5'-TGTACAGTGT-3' core sequence. May function as a transcriptional transactivator and transcriptional repressor. Probably exerts its repressor effect by preventing GATA3 from binding to DNA. May play a role in regulating the differentiation and activation of helper T-cells. The polypeptide is Zinc finger and BTB domain-containing protein 32 (ZBTB32) (Homo sapiens (Human)).